Here is a 334-residue protein sequence, read N- to C-terminus: Proline-serine-threonine phosphatase-interacting protein 2 (334 aa).

The region spanning 4–264 (SLFKGNFWSA…SLEMCSIQRD (261 aa)) is the F-BAR domain. A coiled-coil region spans residues 66 to 166 (GQSEINTLKR…AVSRSANLVN (101 aa)). The disordered stretch occupies residues 295–322 (VPAGKATGPNLARRGPLPIPKSSPDDPN). Tyr323 and Tyr329 each carry phosphotyrosine.

Post-translationally, phosphorylated on tyrosine.

The protein localises to the cytoplasm. It is found in the membrane. Its function is as follows. Binds to F-actin. May be involved in regulation of the actin cytoskeleton. This chain is Proline-serine-threonine phosphatase-interacting protein 2 (PSTPIP2), found in Homo sapiens (Human).